A 141-amino-acid polypeptide reads, in one-letter code: Large ribosomal subunit protein uL11A (141 aa).

It belongs to the universal ribosomal protein uL11 family. Part of the ribosomal stalk of the 50S ribosomal subunit. Interacts with L10 and the large rRNA to form the base of the stalk. L10 forms an elongated spine to which L12 dimers bind in a sequential fashion forming a multimeric L10(L12)X complex. In terms of processing, one or more lysine residues are methylated.

In terms of biological role, forms part of the ribosomal stalk which helps the ribosome interact with GTP-bound translation factors. This Bacillus cereus (strain ATCC 14579 / DSM 31 / CCUG 7414 / JCM 2152 / NBRC 15305 / NCIMB 9373 / NCTC 2599 / NRRL B-3711) protein is Large ribosomal subunit protein uL11A.